We begin with the raw amino-acid sequence, 112 residues long: Class I hydrophobin 7 (112 aa).

Residues 1–23 form the signal peptide; that stretch reads MFARQATSVSAFLVLTLSLFAAA. 4 cysteine pairs are disulfide-bonded: Cys36–Cys93, Cys43–Cys87, Cys44–Cys74, and Cys94–Cys107. N-linked (GlcNAc...) asparagine glycosylation is present at Asn96.

This sequence belongs to the fungal hydrophobin family. Self-assembles to form functional amyloid fibrils called rodlets. Self-assembly into fibrillar rodlets occurs spontaneously at hydrophobic:hydrophilic interfaces and the rodlets further associate laterally to form amphipathic monolayers.

Its subcellular location is the secreted. The protein resides in the cell wall. In terms of biological role, aerial growth, conidiation, and dispersal of filamentous fungi in the environment rely upon a capability of their secreting small amphipathic proteins called hydrophobins (HPBs) with low sequence identity. Class I can self-assemble into an outermost layer of rodlet bundles on aerial cell surfaces, conferring cellular hydrophobicity that supports fungal growth, development and dispersal; whereas Class II form highly ordered films at water-air interfaces through intermolecular interactions but contribute nothing to the rodlet structure. The protein is Class I hydrophobin 7 of Flammulina velutipes (Agaricus velutipes).